The following is a 202-amino-acid chain: Large ribosomal subunit protein bL25 (202 aa).

Belongs to the bacterial ribosomal protein bL25 family. CTC subfamily. As to quaternary structure, part of the 50S ribosomal subunit; part of the 5S rRNA/L5/L18/L25 subcomplex. Contacts the 5S rRNA. Binds to the 5S rRNA independently of L5 and L18.

This is one of the proteins that binds to the 5S RNA in the ribosome where it forms part of the central protuberance. The sequence is that of Large ribosomal subunit protein bL25 from Rickettsia bellii (strain OSU 85-389).